Here is a 285-residue protein sequence, read N- to C-terminus: MIVCKIPEEVLDQVRLWKAQGKRIGFVPTMGFLHEGHAYLFEECISKADKTVVSIFVNPAQFNDPEDYAKYPVNTEGDLKLCESKKVDLVFLPDKETIYPDGIPDIVLKIPNLMKSLCAVSRPGHFEGVLLVISRLFHFVQPDFAFFGKKDYQQYLLIREFCNTLAFPIEVIGCETVRSSQGLALSSRNSRLSETEKEESLLIYRSLKLGENQIFSGIKNPLLVKEIMKDVLDSSSKIRLDYLEILNADTLDPLEVLEGEILLAIAAFIGPVRLIDNLTLSVPIS.

30 to 37 contributes to the ATP binding site; that stretch reads MGFLHEGH. H37 acts as the Proton donor in catalysis. Q61 provides a ligand contact to (R)-pantoate. Residue Q61 coordinates beta-alanine. 148–151 contacts ATP; the sequence is GKKD. (R)-pantoate is bound at residue Q154. Residues V177 and 185-188 contribute to the ATP site; that span reads LSSR.

The protein belongs to the pantothenate synthetase family. In terms of assembly, homodimer.

It localises to the cytoplasm. The enzyme catalyses (R)-pantoate + beta-alanine + ATP = (R)-pantothenate + AMP + diphosphate + H(+). It functions in the pathway cofactor biosynthesis; (R)-pantothenate biosynthesis; (R)-pantothenate from (R)-pantoate and beta-alanine: step 1/1. In terms of biological role, catalyzes the condensation of pantoate with beta-alanine in an ATP-dependent reaction via a pantoyl-adenylate intermediate. The sequence is that of Pantothenate synthetase from Leptospira interrogans serogroup Icterohaemorrhagiae serovar copenhageni (strain Fiocruz L1-130).